Reading from the N-terminus, the 483-residue chain is Sphingomyelin phosphodiesterase 5 (483 aa).

The tract at residues 1–20 (MSLPDISRRRSPVPQEDWPL) is disordered. Residues 80–100 (VLLPLVVVGLPLALVGLALWL) form a helical membrane-spanning segment. Residue E209 participates in Mg(2+) binding. H471 functions as the Proton acceptor in the catalytic mechanism.

The protein belongs to the neutral sphingomyelinase family. Mg(2+) is required as a cofactor. The cofactor is Mn(2+). In terms of tissue distribution, highly expressed in testis, pancreas, epididymis, and brain.

The protein resides in the mitochondrion inner membrane. The protein localises to the endoplasmic reticulum membrane. The catalysed reaction is a sphingomyelin + H2O = phosphocholine + an N-acylsphing-4-enine + H(+). It carries out the reaction N-(hexadecanoyl)-sphing-4-enine-1-phosphocholine + H2O = N-hexadecanoylsphing-4-enine + phosphocholine + H(+). It functions in the pathway lipid metabolism; sphingolipid metabolism. Its activity is regulated as follows. Activated by anionic phospholipids, specially cardiolipin and phosphatidylserine. Functionally, catalyzes the hydrolysis of membrane sphingomyelin to form phosphorylcholine and ceramide. The sequence is that of Sphingomyelin phosphodiesterase 5 from Mus musculus (Mouse).